Reading from the N-terminus, the 552-residue chain is Membrane protein insertase YidC (552 aa).

5 helical membrane passes run 7-24, 364-384, 434-454, 473-493, and 508-528; these read VLWV…DNWQ, WGWA…PLSA, LPVV…LASV, PFFI…SLNP, and PIAF…YYVV.

It belongs to the OXA1/ALB3/YidC family. Type 1 subfamily. Interacts with the Sec translocase complex via SecD. Specifically interacts with transmembrane segments of nascent integral membrane proteins during membrane integration.

Its subcellular location is the cell inner membrane. Required for the insertion and/or proper folding and/or complex formation of integral membrane proteins into the membrane. Involved in integration of membrane proteins that insert both dependently and independently of the Sec translocase complex, as well as at least some lipoproteins. Aids folding of multispanning membrane proteins. In Burkholderia cenocepacia (strain HI2424), this protein is Membrane protein insertase YidC.